An 89-amino-acid chain; its full sequence is Small ribosomal subunit protein bS16 (89 aa).

The protein belongs to the bacterial ribosomal protein bS16 family.

The sequence is that of Small ribosomal subunit protein bS16 from Chloroflexus aggregans (strain MD-66 / DSM 9485).